The primary structure comprises 424 residues: Histidine--tRNA ligase (424 aa).

This sequence belongs to the class-II aminoacyl-tRNA synthetase family. As to quaternary structure, homodimer.

The protein localises to the cytoplasm. It catalyses the reaction tRNA(His) + L-histidine + ATP = L-histidyl-tRNA(His) + AMP + diphosphate + H(+). This chain is Histidine--tRNA ligase, found in Shewanella pealeana (strain ATCC 700345 / ANG-SQ1).